The following is a 348-amino-acid chain: Probable protein phosphatase 2C 35 (348 aa).

The segment covering 11-24 (RYPSSSSDGDSRGP) has biased composition (low complexity). Residues 11–40 (RYPSSSSDGDSRGPLEANGVLKGKDQKPLG) are disordered. Residues 52–342 (VYSVLSQRGY…DDITIIIVQI (291 aa)) enclose the PPM-type phosphatase domain. Mn(2+) is bound by residues aspartate 93, glycine 94, aspartate 289, and aspartate 333.

It belongs to the PP2C family. The cofactor is Mg(2+). Mn(2+) is required as a cofactor.

It catalyses the reaction O-phospho-L-seryl-[protein] + H2O = L-seryl-[protein] + phosphate. The enzyme catalyses O-phospho-L-threonyl-[protein] + H2O = L-threonyl-[protein] + phosphate. This is Probable protein phosphatase 2C 35 from Arabidopsis thaliana (Mouse-ear cress).